We begin with the raw amino-acid sequence, 283 residues long: Lysozyme-like protein 7 (283 aa).

A signal peptide spans 1 to 18; that stretch reads MAHKSIVIFSVLAVLCHS. In terms of domain architecture, Ch-type lysozyme spans 53-273; that stretch reads YAYALDIYVQ…AVEEDGKIYA (221 aa).

The protein belongs to the glycosyl hydrolase 25 family. In terms of tissue distribution, expressed in intestine. Expressed in rectal gland cells and head neurons.

Its function is as follows. Plays a role in resistance to Gram-positive bacteria B.thuringiensis and M.nematophilum and Gram-negative bacteria S.boydii or S.flexneri infection and to fungus C.neoformans infection. Plays a role in susceptibility to Gram-negative bacterium S.typhimurium infection. This Caenorhabditis elegans protein is Lysozyme-like protein 7.